The sequence spans 77 residues: Sec-independent protein translocase protein TatA (77 aa).

A helical membrane pass occupies residues 3-23 (VFGIGLPELIVILVVALLIFG). The interval 56–77 (TAALEEEQQAKAEAESPREISP) is disordered. Over residues 63-77 (QQAKAEAESPREISP) the composition is skewed to basic and acidic residues.

The protein belongs to the TatA/E family. In terms of assembly, forms a complex with TatC.

It localises to the cell inner membrane. In terms of biological role, part of the twin-arginine translocation (Tat) system that transports large folded proteins containing a characteristic twin-arginine motif in their signal peptide across membranes. TatA could form the protein-conducting channel of the Tat system. The polypeptide is Sec-independent protein translocase protein TatA (Thermosynechococcus vestitus (strain NIES-2133 / IAM M-273 / BP-1)).